Reading from the N-terminus, the 115-residue chain is NADH-ubiquinone oxidoreductase chain 3 (115 aa).

A run of 3 helical transmembrane segments spans residues 4–24 (LMAL…AFWL), 55–75 (FFLV…LLPL), and 84–104 (INIM…GLAY).

The protein belongs to the complex I subunit 3 family. In terms of assembly, core subunit of respiratory chain NADH dehydrogenase (Complex I) which is composed of 45 different subunits. Interacts with TMEM186. Interacts with TMEM242.

It is found in the mitochondrion inner membrane. It carries out the reaction a ubiquinone + NADH + 5 H(+)(in) = a ubiquinol + NAD(+) + 4 H(+)(out). Core subunit of the mitochondrial membrane respiratory chain NADH dehydrogenase (Complex I) which catalyzes electron transfer from NADH through the respiratory chain, using ubiquinone as an electron acceptor. Essential for the catalytic activity of complex I. This chain is NADH-ubiquinone oxidoreductase chain 3, found in Peromyscus melanotis (Black-eared mouse).